Here is a 207-residue protein sequence, read N- to C-terminus: Putative acetyltransferase C18B11.09c (207 aa).

This sequence belongs to the transferase hexapeptide repeat family.

This chain is Putative acetyltransferase C18B11.09c, found in Schizosaccharomyces pombe (strain 972 / ATCC 24843) (Fission yeast).